The sequence spans 282 residues: HTH-type transcriptional activator RhaR (282 aa).

In terms of domain architecture, HTH araC/xylS-type spans 179-277 (DKLITRLAAS…GMTPSQWRHL (99 aa)). 2 DNA-binding regions (H-T-H motif) span residues 196-217 (DKFC…RQQT) and 244-267 (ISDI…TRET).

Binds DNA as a dimer.

The protein localises to the cytoplasm. Its function is as follows. Activates expression of the rhaSR operon in response to L-rhamnose. The sequence is that of HTH-type transcriptional activator RhaR from Escherichia coli O139:H28 (strain E24377A / ETEC).